The primary structure comprises 60 residues: MAVPKRKKSKSRRNMHRSHHAIKPKNIVVCATTGEFMLPHNIAVDNSYKGKRVFIKQKAE.

The tract at residues 1-23 (MAVPKRKKSKSRRNMHRSHHAIK) is disordered.

The protein belongs to the bacterial ribosomal protein bL32 family.

The protein is Large ribosomal subunit protein bL32 of Wolbachia pipientis subsp. Culex pipiens (strain wPip).